The chain runs to 164 residues: Two-component response regulator ARR16 (164 aa).

The 131-residue stretch at 30–160 (HVLAVDDNLI…DVEKLKCHLM (131 aa)) folds into the Response regulatory domain. A 4-aspartylphosphate modification is found at D93.

Belongs to the ARR family. Type-A subfamily. Two-component system major event consists of a His-to-Asp phosphorelay between a sensor histidine kinase (HK) and a response regulator (RR). In plants, the His-to-Asp phosphorelay involves an additional intermediate named Histidine-containing phosphotransfer protein (HPt). This multistep phosphorelay consists of a His-Asp-His-Asp sequential transfer of a phosphate group between first a His and an Asp of the HK protein, followed by the transfer to a conserved His of the HPt protein and finally the transfer to an Asp in the receiver domain of the RR protein.

It localises to the nucleus. In terms of biological role, functions as a response regulator involved in His-to-Asp phosphorelay signal transduction system. Phosphorylation of the Asp residue in the receiver domain activates the ability of the protein to promote the transcription of target genes. Type-A response regulators seem to act as negative regulators of the cytokinin signaling. In Arabidopsis thaliana (Mouse-ear cress), this protein is Two-component response regulator ARR16 (ARR16).